Here is a 510-residue protein sequence, read N- to C-terminus: Cytochrome P450 703A2 (510 aa).

The helical transmembrane segment at 2-22 threads the bilayer; sequence ILVLASLFAVLILNVLLWRWL. Cys-451 provides a ligand contact to heme.

This sequence belongs to the cytochrome P450 family. Requires heme as cofactor.

The protein localises to the membrane. It catalyses the reaction dodecanoate + reduced [NADPH--hemoprotein reductase] + O2 = 7-hydroxydodecanoate + oxidized [NADPH--hemoprotein reductase] + H2O + H(+). Its function is as follows. Involved in pollen wall development. Catalyzes the conversion of medium-chain saturated fatty acids to the corresponding monohydroxylated fatty acids, with a preferential hydroxylation of lauric acid at the C-7 position. In-chain hydroxylated fatty acids, together with omega-hydroxylated fatty acids, are key monomeric aliphatic building blocks for sporopollenin synthesis during exine formation. The protein is Cytochrome P450 703A2 of Arabidopsis thaliana (Mouse-ear cress).